Here is an 823-residue protein sequence, read N- to C-terminus: Putative ankyrin repeat domain-containing protein 20A2 (823 aa).

ANK repeat units lie at residues 66–95 (QHRT…QIDV), 99–128 (ENRT…NPNL), 132–161 (YGNT…HIEA), 165–194 (DNNT…SSHA), and 198–227 (LRRS…DVFA). 2 disordered regions span residues 301 to 343 (VPEK…EVED) and 355 to 402 (VQTL…LSEN). Residues 372 to 384 (QERHERSEKKQPQ) show a composition bias toward basic and acidic residues. 3 coiled-coil regions span residues 431 to 480 (KKLK…KQLE), 565 to 724 (EMIT…NNST), and 776 to 805 (LVLE…EKTE).

This is Putative ankyrin repeat domain-containing protein 20A2 from Homo sapiens (Human).